A 373-amino-acid chain; its full sequence is Secondary metabolism regulator laeA (373 aa).

The tract at residues 55-81 (ERDPAAGRWHANGSPSINSTSSKNPDR) is disordered. Polar residues predominate over residues 67 to 77 (GSPSINSTSSK).

The protein belongs to the methyltransferase superfamily. LaeA methyltransferase family. Component of the heterotrimeric velvet complex composed of laeA, veA and velB; VeA acting as a bridging protein between laeA and velB.

It is found in the nucleus. The catalysed reaction is L-methionyl-[protein] + S-adenosyl-L-methionine = S-methyl-L-methionyl-[protein] + S-adenosyl-L-homocysteine. Functionally, methyltransferase that performs automethylation. No other methyl-accepting substrate has been identified yet. Component of the velvet transcription factor complex that acts as a global regulator for secondary metabolite gene expression. Positively controls expression of 20% to 40% of major classes of secondary metabolite biosynthesis genes such as nonribosomal peptide synthetases, polyketide synthases, and P450 monooxygenases. Controls the expression of the gliotoxin gene cluster. Controls the expression of the fumitremorgin, fumagillin, and pseurotin gene clusters, where genes for fumagillin and pseurotin are physically intertwined in a single supercluster. Regulates the biosynthetic genes required for endocrocin production. Secondary metabolites under the transcriptional regulation of laeA are necessary for inhibition of angiogenesis during invasive infection in mice. Controls the expression of cell surface rodA, a hydrophobin that acts as an antiphagocytic molecule. Also regulates the expression of genes involved in conidial biosynthesis. The protein is Secondary metabolism regulator laeA of Aspergillus fumigatus (strain ATCC MYA-4609 / CBS 101355 / FGSC A1100 / Af293) (Neosartorya fumigata).